We begin with the raw amino-acid sequence, 1048 residues long: MEGEREGVVAKNEDNAGGGGGGLGTGGNGGGGGGGSANGRRRWRGGGSSGYRQHPIIQAYPALLPLPINGATGHAHINGAVSLPLPLPPPVLLYLQPPPPPPLLPLLPKVAAATFYGKPPKAADAAPRGSMWKHRPSKKPPPHAITAALLPLPRDGKALQEKIFFANERKTSEKEVNHVDTHEKFTVAPLDNAIARRPDMGGVEGAEIPLSANHFLVQFDPGQKIFHYNVDISPRPSKETARMIKKKLVEENPSVLSGSQPAFDGRKNLYSPVRFQEDRVEFFVSLPVALARCSVVKEDTGHMLDKQKLKTFKVNVRLVSKLCGEDLNKYLNEDKDGIPLPQDYLHALDVVLREGAMESSILVGRSLYARSMGEARDIGGGAVGLRGFFQRLRPTKQGLALNVDLSLSAFHESTGIISYLQKRCDFLKDLPQKKTRALAEEEHREVEKALKNIRVFVCHRETNQRYHVHSLTKETTENLKFRDRSGKDLMVVDYFKEHYNHDIQFRNLPCLQIGRSKPCYVPMELCVVCEGQKFLGKLSDEQTSKILKMGCERPSERKGIIKGVVKGAFHARSDTYADQFSLQVSKHMTKLSGRVLLPPKLKLGSSGRIKDITPDRFDRQWSFLDSHVAEGSKIKSWALISFGGTPEQHFCITKFVNQLSNRCEQLGILLNKKTIISPIFERIQLLNNVGILEGKLKKIQEAASGNLQLLICVMERRHQGYADLKRIAETSIGVVTQCCLYSNLSKLTSQFLTNLALKINAKLGGCNIALYSSFPCQIPRIFLSEEPVMFMGADVTHPHPLDDSSPSVVAVVASMNWPSANKYISRMRSQTHRKEIIEQLDVMAGELLEEFLKEVGKLPSRIIFFRDGVSETQFYKVLKEEMHAVRTTCSRYPGYKPLITFIVVQKRHHTRLFHRERNGSSSHYSDQNIPPGTVVDTVITHPREFDFYLCSHWGTKGTSRPTHYHVLWDENNFRSDEVQQLIHNLCYTFARCTRPVSLVPPAYYAHLAAYRGRLYLERSDTTMYRVSPLQTVPLPKLRDNVKRLMFYC.

Residues 1–14 (MEGEREGVVAKNED) show a composition bias toward basic and acidic residues. 2 disordered regions span residues 1-50 (MEGE…GSSG) and 121-141 (KAAD…KKPP). A compositionally biased stretch (gly residues) spans 16 to 37 (AGGGGGGLGTGGNGGGGGGGSA). A compositionally biased stretch (basic residues) spans 131-141 (MWKHRPSKKPP). In terms of domain architecture, PAZ spans 422 to 530 (KRCDFLKDLP…VPMELCVVCE (109 aa)). The Piwi domain maps to 709-1017 (LLICVMERRH…AAYRGRLYLE (309 aa)).

This sequence belongs to the argonaute family. Ago subfamily. In terms of tissue distribution, expressed in the reproductive shoot apex.

In terms of biological role, involved in the RNA silencing pathway. May bind to short RNAs such as microRNAs (miRNAs) or short interfering RNAs (siRNAs), and represses the translation of mRNAs which are complementary to them. Regulates shoot apical meristem (SAM) initiation and maintenance and leaf polarization through the trans-acting siRNAS (ta-siRNAs) pathway which probably modulates the expression of the ARF2, ARF3, ARF4, ARF14 and ARF15 genes. This Oryza sativa subsp. japonica (Rice) protein is Protein argonaute 7 (AGO7).